A 169-amino-acid chain; its full sequence is Large ribosomal subunit protein uL10 (169 aa).

This sequence belongs to the universal ribosomal protein uL10 family. In terms of assembly, part of the 50S ribosomal subunit.

The sequence is that of Large ribosomal subunit protein uL10 (rplJ) from Deinococcus radiodurans (strain ATCC 13939 / DSM 20539 / JCM 16871 / CCUG 27074 / LMG 4051 / NBRC 15346 / NCIMB 9279 / VKM B-1422 / R1).